An 83-amino-acid polypeptide reads, in one-letter code: Apolipoprotein C-I, acidic form (83 aa).

The signal sequence occupies residues 1–26 (MRLFLSLPVLVVVLSMVLEGPAPAQG).

This sequence belongs to the apolipoprotein C1 family.

It localises to the secreted. Inhibitor of lipoprotein binding to the low density lipoprotein (LDL) receptor, LDL receptor-related protein, and very low density lipoprotein (VLDL) receptor. Associates with high density lipoproteins (HDL) and the triacylglycerol-rich lipoproteins in the plasma and makes up about 10% of the protein of the VLDL and 2% of that of HDL. Appears to interfere directly with fatty acid uptake and is also the major plasma inhibitor of cholesteryl ester transfer protein (CETP). Binds free fatty acids and reduces their intracellular esterification. Modulates the interaction of APOE with beta-migrating VLDL and inhibits binding of beta-VLDL to the LDL receptor-related protein. The sequence is that of Apolipoprotein C-I, acidic form (APOC1A) from Pongo abelii (Sumatran orangutan).